Consider the following 80-residue polypeptide: Protein pegasus (80 aa).

The signal sequence occupies residues 1 to 22 (MKLSAVLLAIALLALSLVQCLG). The region spanning 24–80 (PDPSTKCVMECDTQEYRSICAADDKGSTKTYRNLCVMKTENCLQNANFQKISDKECP) is the Kazal-like domain. Cystine bridges form between Cys-30-Cys-65, Cys-34-Cys-58, and Cys-43-Cys-79.

Interacts with wg; the interaction facilitates short-range diffusion of wg. In terms of tissue distribution, strongly expressed in the developing fly wing but is excluded from the presumptive wing margin.

It localises to the secreted. Functionally, increases short-range diffusion of the wingless/wg protein, enhancing its signaling and expression of target genes required for wing margin morphogenesis. May act as a serine protease inhibitor since it possess the Kazal serine protease inhibitor signature. This is Protein pegasus from Drosophila melanogaster (Fruit fly).